The sequence spans 86 residues: Protein U17 (86 aa).

The sequence is that of Protein U17 (U17/U16) from Homo sapiens (Human).